We begin with the raw amino-acid sequence, 391 residues long: uncharacterized protein (391 aa).

Residues 85 to 314 (ATAAFVGFPS…LKEKIYEKLG (230 aa)) form the OBG-type G domain. GTP is bound by residues 91–98 (GFPSVGKS), 137–141 (DAPGI), and 267–270 (NKID). Residues 314-389 (GFIKIYLKPQ…EDGDILTIVI (76 aa)) form the TGS domain.

It belongs to the TRAFAC class OBG-HflX-like GTPase superfamily. OBG GTPase family.

This is an uncharacterized protein from Methanocaldococcus jannaschii (strain ATCC 43067 / DSM 2661 / JAL-1 / JCM 10045 / NBRC 100440) (Methanococcus jannaschii).